The chain runs to 21 residues: Peptide PGLa-R4 (21 aa).

Leu-21 bears the Leucine amide mark.

In terms of tissue distribution, expressed by the skin glands.

It localises to the secreted. In terms of biological role, antimicrobial peptide. This is Peptide PGLa-R4 from Xenopus ruwenzoriensis (Uganda clawed frog).